Here is a 314-residue protein sequence, read N- to C-terminus: Flotillin-like protein FloA (314 aa).

The chain crosses the membrane as a helical span at residues 4 to 24; sequence IGPIIIAVLIIIFLIVFFTLV.

Belongs to the flotillin-like FloA family. Homooligomerizes.

The protein resides in the cell membrane. Its subcellular location is the membrane raft. Its function is as follows. Found in functional membrane microdomains (FMM) that may be equivalent to eukaryotic membrane rafts. FMMs are highly dynamic and increase in number as cells age. Flotillins are thought to be important factors in membrane fluidity. This chain is Flotillin-like protein FloA, found in Listeria innocua serovar 6a (strain ATCC BAA-680 / CLIP 11262).